The sequence spans 172 residues: 3-hydroxydecanoyl-[acyl-carrier-protein] dehydratase (172 aa).

Histidine 71 is a catalytic residue.

It belongs to the thioester dehydratase family. FabA subfamily. As to quaternary structure, homodimer.

The protein resides in the cytoplasm. It carries out the reaction a (3R)-hydroxyacyl-[ACP] = a (2E)-enoyl-[ACP] + H2O. The enzyme catalyses (3R)-hydroxydecanoyl-[ACP] = (2E)-decenoyl-[ACP] + H2O. The catalysed reaction is (2E)-decenoyl-[ACP] = (3Z)-decenoyl-[ACP]. The protein operates within lipid metabolism; fatty acid biosynthesis. Its function is as follows. Necessary for the introduction of cis unsaturation into fatty acids. Catalyzes the dehydration of (3R)-3-hydroxydecanoyl-ACP to E-(2)-decenoyl-ACP and then its isomerization to Z-(3)-decenoyl-ACP. Can catalyze the dehydratase reaction for beta-hydroxyacyl-ACPs with saturated chain lengths up to 16:0, being most active on intermediate chain length. The protein is 3-hydroxydecanoyl-[acyl-carrier-protein] dehydratase of Sodalis glossinidius (strain morsitans).